We begin with the raw amino-acid sequence, 140 residues long: ATP synthase epsilon chain (140 aa).

Belongs to the ATPase epsilon chain family. In terms of assembly, F-type ATPases have 2 components, CF(1) - the catalytic core - and CF(0) - the membrane proton channel. CF(1) has five subunits: alpha(3), beta(3), gamma(1), delta(1), epsilon(1). CF(0) has three main subunits: a, b and c.

It localises to the cell inner membrane. Functionally, produces ATP from ADP in the presence of a proton gradient across the membrane. The polypeptide is ATP synthase epsilon chain (Vibrio vulnificus (strain CMCP6)).